The following is an 882-amino-acid chain: DNA mismatch repair protein MutS (882 aa).

635 to 642 lines the ATP pocket; sequence GPNMGGKS.

Belongs to the DNA mismatch repair MutS family.

In terms of biological role, this protein is involved in the repair of mismatches in DNA. It is possible that it carries out the mismatch recognition step. This protein has a weak ATPase activity. The polypeptide is DNA mismatch repair protein MutS (Janthinobacterium sp. (strain Marseille) (Minibacterium massiliensis)).